Reading from the N-terminus, the 393-residue chain is Methylthioribose kinase (393 aa).

Residues Asn38, Lys53, and 107 to 109 contribute to the ATP site; that span reads EDL. Residue Asp225 coordinates substrate. 242–244 contributes to the ATP binding site; the sequence is DPE. Arg332 provides a ligand contact to substrate.

Belongs to the methylthioribose kinase family. Homodimer.

It carries out the reaction 5-(methylsulfanyl)-D-ribose + ATP = 5-(methylsulfanyl)-alpha-D-ribose 1-phosphate + ADP + H(+). Its pathway is amino-acid biosynthesis; L-methionine biosynthesis via salvage pathway; S-methyl-5-thio-alpha-D-ribose 1-phosphate from S-methyl-5'-thioadenosine (hydrolase route): step 2/2. Its function is as follows. Catalyzes the phosphorylation of methylthioribose into methylthioribose-1-phosphate. The polypeptide is Methylthioribose kinase (Bacillus cereus (strain ZK / E33L)).